A 323-amino-acid polypeptide reads, in one-letter code: tRNA U34 carboxymethyltransferase (323 aa).

Carboxy-S-adenosyl-L-methionine contacts are provided by residues K91, W105, K110, G130, 152–154 (DPT), 181–182 (IE), M196, Y200, and R315.

It belongs to the class I-like SAM-binding methyltransferase superfamily. CmoB family. Homotetramer.

It catalyses the reaction carboxy-S-adenosyl-L-methionine + 5-hydroxyuridine(34) in tRNA = 5-carboxymethoxyuridine(34) in tRNA + S-adenosyl-L-homocysteine + H(+). Catalyzes carboxymethyl transfer from carboxy-S-adenosyl-L-methionine (Cx-SAM) to 5-hydroxyuridine (ho5U) to form 5-carboxymethoxyuridine (cmo5U) at position 34 in tRNAs. The polypeptide is tRNA U34 carboxymethyltransferase (Escherichia coli O8 (strain IAI1)).